Consider the following 256-residue polypeptide: Floral homeotic protein APETALA 1 (256 aa).

An MADS-box domain is found at 1-61 (MGRGRVQLKR…GKLFEYSTDS (61 aa)). The K-box domain maps to 88 to 178 (NTNWSMEYNR…FKQIKEREKI (91 aa)).

As to quaternary structure, homodimer capable of binding to CArG-box sequences.

It is found in the nucleus. Its function is as follows. Transcription factor that promotes early floral meristem identity in synergy with LEAFY. Displays a redundant function with CAULIFLOWER in the up-regulation of LEAFY. Required subsequently for the transition of an inflorescence meristem into a floral meristem, and for the normal development of sepals and petals in flowers. Regulates positively B class homeotic proteins. The sequence is that of Floral homeotic protein APETALA 1 (AP1) from Citrus sinensis (Sweet orange).